The primary structure comprises 280 residues: Inner kinetochore subunit fta1 (280 aa).

Belongs to the CENP-L/IML3 family. As to quaternary structure, component of the inner kinetochore constitutive centromere-associated network (CCAN) (also known as central kinetochore Sim4 complex in fission yeast), which is composed of at least cnl2, cnp3, cnp20, fta1, fta2, fta3, fta4, fta6, fta7, mal2, mhf1, mhf2, mis6, mis15, mis17, sim4 and wip1.

It is found in the nucleus. Its subcellular location is the chromosome. It localises to the centromere. The protein localises to the kinetochore. Its function is as follows. Component of the kinetochore, a multiprotein complex that assembles on centromeric DNA and attaches chromosomes to spindle microtubules, mediating chromosome segregation and sister chromatid segregation during meiosis and mitosis. Component of the inner kinetochore constitutive centromere-associated network (CCAN), which serves as a structural platform for outer kinetochore assembly. The protein is Inner kinetochore subunit fta1 (fta1) of Schizosaccharomyces pombe (strain 972 / ATCC 24843) (Fission yeast).